A 443-amino-acid polypeptide reads, in one-letter code: Protein PRRC1 (443 aa).

Residues 1 to 165 (MMEESGIETT…FSAPPVTGIL (165 aa)) are disordered. The span at 29–45 (EAHSAATSSFSSPNVSG) shows a compositional bias: polar residues. The segment covering 59–72 (PSLPPVQPSAPPPF) has biased composition (pro residues). Low complexity-rich tracts occupy residues 81–96 (VPLS…SPSP) and 109–134 (PPAT…FSVG). Residue serine 406 is modified to Phosphoserine.

The protein belongs to the PRRC1 family. As to quaternary structure, interacts with PRKAR1A; resulting in PKA activation.

The protein localises to the golgi apparatus. The protein resides in the cytoplasm. In terms of biological role, may act as a regulator of the protein kinase A (PKA) during embryonic development. The sequence is that of Protein PRRC1 (Prrc1) from Mus musculus (Mouse).